Here is a 296-residue protein sequence, read N- to C-terminus: Endochitinase 3 (296 aa).

The GH18 domain occupies 12 to 296 (HKLTVYWGAE…VKNGQLPEED (285 aa)). N-linked (GlcNAc...) asparagine glycans are attached at residues Asn32 and Asn152. The active-site Proton donor is Glu153. The N-linked (GlcNAc...) asparagine glycan is linked to Asn228.

The protein belongs to the glycosyl hydrolase 18 family. Chitinase class III subfamily.

The protein resides in the secreted. The catalysed reaction is Random endo-hydrolysis of N-acetyl-beta-D-glucosaminide (1-&gt;4)-beta-linkages in chitin and chitodextrins.. Functionally, secreted chitinase involved in the degradation of chitin, a component of the cell walls of fungi and exoskeletal elements of some animals (including worms and arthropods). Participates in the infection process and directly acts in the penetration process of the host cuticle. Involved in heat-shock adaptation. In Metarhizium anisopliae (Entomophthora anisopliae), this protein is Endochitinase 3 (chi3).